A 526-amino-acid polypeptide reads, in one-letter code: Glucose-6-phosphate isomerase (526 aa).

The Proton donor role is filled by Glu320. Catalysis depends on residues His349 and Lys453.

Belongs to the GPI family.

It is found in the cytoplasm. It carries out the reaction alpha-D-glucose 6-phosphate = beta-D-fructose 6-phosphate. It functions in the pathway carbohydrate biosynthesis; gluconeogenesis. The protein operates within carbohydrate degradation; glycolysis; D-glyceraldehyde 3-phosphate and glycerone phosphate from D-glucose: step 2/4. In terms of biological role, catalyzes the reversible isomerization of glucose-6-phosphate to fructose-6-phosphate. This is Glucose-6-phosphate isomerase from Rippkaea orientalis (strain PCC 8801 / RF-1) (Cyanothece sp. (strain PCC 8801)).